The primary structure comprises 127 residues: Modulator protein MzrA (127 aa).

Topologically, residues 1 to 10 are cytoplasmic; the sequence is MQIPRMSLRQ. Residues 11–31 form a helical membrane-spanning segment; that stretch reads LAWSGAVLLLVGTLLLAWSAV. The Periplasmic segment spans residues 32-127; it reads RQQESTLAIR…RLRDNSHRFG (96 aa).

Belongs to the MzrA family. In terms of assembly, interacts with EnvZ.

The protein localises to the cell inner membrane. Modulates the activity of the EnvZ/OmpR two-component regulatory system, probably by directly modulating EnvZ enzymatic activity and increasing stability of phosphorylated OmpR. Links the two-component systems CpxA/CpxR and EnvZ/OmpR. The polypeptide is Modulator protein MzrA (Escherichia coli (strain K12)).